Reading from the N-terminus, the 1364-residue chain is Serine protease SepA autotransporter (1364 aa).

The signal sequence occupies residues 1–56; the sequence is MNKIYYLKYCHITKSLIAVSELARRVTCKSHRRLSRRVILTSVAALSLSSAWPALS. In terms of domain architecture, Peptidase S6 spans 57-307; sequence ATVSAEIPYQ…VVTTQDFLGQ (251 aa). Catalysis depends on charge relay system residues histidine 134, aspartate 162, and serine 267. In terms of domain architecture, Autotransporter spans 1098 to 1364; it reads DTQGDAGVWA…AINANFRYVF (267 aa).

Post-translationally, cleaved to release the mature protein from the outer membrane. Cleavage is performed by an unknown protease.

Its subcellular location is the periplasm. The protein resides in the secreted. The protein localises to the cell surface. It is found in the cell outer membrane. With respect to regulation, inhibited by the serine protease inhibitor PMSF, but not by benzamidine, alpha 1-antitrypsin, alpha 1-antichymotrypsin. Not inhibited by metalloprotease inhibitors such as EDTA and orthophenanthroline. Functionally, major protein secreted in laboratory media showing proteolytic activity. May be involved in invasion and destruction of host intestinal epithelium. In Shigella flexneri, this protein is Serine protease SepA autotransporter (sepA).